The primary structure comprises 248 residues: Ribonuclease PH (248 aa).

Phosphate contacts are provided by residues Arg86 and 124-126 (GTR).

This sequence belongs to the RNase PH family. Homohexameric ring arranged as a trimer of dimers.

It catalyses the reaction tRNA(n+1) + phosphate = tRNA(n) + a ribonucleoside 5'-diphosphate. Functionally, phosphorolytic 3'-5' exoribonuclease that plays an important role in tRNA 3'-end maturation. Removes nucleotide residues following the 3'-CCA terminus of tRNAs; can also add nucleotides to the ends of RNA molecules by using nucleoside diphosphates as substrates, but this may not be physiologically important. Probably plays a role in initiation of 16S rRNA degradation (leading to ribosome degradation) during starvation. The sequence is that of Ribonuclease PH from Listeria monocytogenes serotype 4b (strain CLIP80459).